A 346-amino-acid polypeptide reads, in one-letter code: Protein FAF1 (346 aa).

Disordered regions lie at residues Q22–G120 and K323–R346. Over residues F31–T65 the composition is skewed to basic and acidic residues. Acidic residues predominate over residues S72–N85.

In terms of assembly, interacts with KRR1.

The protein resides in the nucleus. It localises to the nucleolus. Functionally, required for pre-rRNA processing and 40S ribosomal subunit assembly. Seems to act in the processing of 35S rRNA at the A(0), A(1), and A(2) cleavage sites. This is Protein FAF1 (FAF1) from Saccharomyces cerevisiae (strain ATCC 204508 / S288c) (Baker's yeast).